Consider the following 107-residue polypeptide: Phosphoribosyl-ATP pyrophosphatase (107 aa).

Belongs to the PRA-PH family.

The protein localises to the cytoplasm. It catalyses the reaction 1-(5-phospho-beta-D-ribosyl)-ATP + H2O = 1-(5-phospho-beta-D-ribosyl)-5'-AMP + diphosphate + H(+). It functions in the pathway amino-acid biosynthesis; L-histidine biosynthesis; L-histidine from 5-phospho-alpha-D-ribose 1-diphosphate: step 2/9. The sequence is that of Phosphoribosyl-ATP pyrophosphatase from Bacillus anthracis (strain A0248).